A 245-amino-acid chain; its full sequence is 1-(5-phosphoribosyl)-5-[(5-phosphoribosylamino)methylideneamino] imidazole-4-carboxamide isomerase (245 aa).

D8 serves as the catalytic Proton acceptor. D129 functions as the Proton donor in the catalytic mechanism.

The protein belongs to the HisA/HisF family.

It localises to the cytoplasm. It carries out the reaction 1-(5-phospho-beta-D-ribosyl)-5-[(5-phospho-beta-D-ribosylamino)methylideneamino]imidazole-4-carboxamide = 5-[(5-phospho-1-deoxy-D-ribulos-1-ylimino)methylamino]-1-(5-phospho-beta-D-ribosyl)imidazole-4-carboxamide. Its pathway is amino-acid biosynthesis; L-histidine biosynthesis; L-histidine from 5-phospho-alpha-D-ribose 1-diphosphate: step 4/9. The protein is 1-(5-phosphoribosyl)-5-[(5-phosphoribosylamino)methylideneamino] imidazole-4-carboxamide isomerase of Rhodopseudomonas palustris (strain BisB18).